The sequence spans 55 residues: Large ribosomal subunit protein bL33 (55 aa).

This sequence belongs to the bacterial ribosomal protein bL33 family.

The sequence is that of Large ribosomal subunit protein bL33 from Xanthomonas axonopodis pv. citri (strain 306).